We begin with the raw amino-acid sequence, 189 residues long: GMP synthase [glutamine-hydrolyzing] subunit A (189 aa).

Residues 5 to 189 (KIIVINNYGQ…MNFFKVCEDY (185 aa)) enclose the Glutamine amidotransferase type-1 domain. C79 serves as the catalytic Nucleophile. Active-site residues include H166 and E168.

Heterodimer composed of a glutamine amidotransferase subunit (A) and a GMP-binding subunit (B).

The catalysed reaction is XMP + L-glutamine + ATP + H2O = GMP + L-glutamate + AMP + diphosphate + 2 H(+). The protein operates within purine metabolism; GMP biosynthesis; GMP from XMP (L-Gln route): step 1/1. Its function is as follows. Catalyzes the synthesis of GMP from XMP. The chain is GMP synthase [glutamine-hydrolyzing] subunit A from Methanococcoides burtonii (strain DSM 6242 / NBRC 107633 / OCM 468 / ACE-M).